A 555-amino-acid chain; its full sequence is Methionine--tRNA ligase (555 aa).

The 'HIGH' region signature appears at Pro-13–His-23. Zn(2+) is bound by residues Cys-144, Cys-147, Cys-157, and Cys-160. The 'KMSKS' region signature appears at Lys-330–Ser-334. Residue Lys-333 coordinates ATP.

The protein belongs to the class-I aminoacyl-tRNA synthetase family. MetG type 1 subfamily. Monomer. Zn(2+) is required as a cofactor.

The protein localises to the cytoplasm. It catalyses the reaction tRNA(Met) + L-methionine + ATP = L-methionyl-tRNA(Met) + AMP + diphosphate. In terms of biological role, is required not only for elongation of protein synthesis but also for the initiation of all mRNA translation through initiator tRNA(fMet) aminoacylation. The sequence is that of Methionine--tRNA ligase from Blochmanniella pennsylvanica (strain BPEN).